The sequence spans 312 residues: DNA primase small subunit PriS (312 aa).

Active-site residues include D88, D90, and D215.

It belongs to the eukaryotic-type primase small subunit family. Heterodimer of a small subunit (PriS) and a large subunit (PriL). Mg(2+) is required as a cofactor. Mn(2+) serves as cofactor.

Its function is as follows. Catalytic subunit of DNA primase, an RNA polymerase that catalyzes the synthesis of short RNA molecules used as primers for DNA polymerase during DNA replication. The small subunit contains the primase catalytic core and has DNA synthesis activity on its own. Binding to the large subunit stabilizes and modulates the activity, increasing the rate of DNA synthesis while decreasing the length of the DNA fragments, and conferring RNA synthesis capability. The DNA polymerase activity may enable DNA primase to also catalyze primer extension after primer synthesis. May also play a role in DNA repair. This Pyrobaculum islandicum (strain DSM 4184 / JCM 9189 / GEO3) protein is DNA primase small subunit PriS.